The primary structure comprises 430 residues: Enolase (430 aa).

Gln-163 lines the (2R)-2-phosphoglycerate pocket. The active-site Proton donor is Glu-205. Mg(2+) contacts are provided by Asp-242, Glu-287, and Asp-314. The (2R)-2-phosphoglycerate site is built by Lys-339, Arg-368, Ser-369, and Lys-390. The active-site Proton acceptor is Lys-339.

Belongs to the enolase family. The cofactor is Mg(2+).

The protein localises to the cytoplasm. It is found in the secreted. Its subcellular location is the cell surface. The catalysed reaction is (2R)-2-phosphoglycerate = phosphoenolpyruvate + H2O. Its pathway is carbohydrate degradation; glycolysis; pyruvate from D-glyceraldehyde 3-phosphate: step 4/5. Its function is as follows. Catalyzes the reversible conversion of 2-phosphoglycerate (2-PG) into phosphoenolpyruvate (PEP). It is essential for the degradation of carbohydrates via glycolysis. The polypeptide is Enolase (Exiguobacterium sibiricum (strain DSM 17290 / CCUG 55495 / CIP 109462 / JCM 13490 / 255-15)).